A 201-amino-acid chain; its full sequence is Acyl-homoserine-lactone synthase (201 aa).

This sequence belongs to the autoinducer synthase family.

The enzyme catalyses a fatty acyl-[ACP] + S-adenosyl-L-methionine = an N-acyl-L-homoserine lactone + S-methyl-5'-thioadenosine + holo-[ACP] + H(+). Required for the synthesis of PAI consisting of 3-oxo-N-(tetrahydro-2-oxo-3-furanyl)-dodecanamide also known as N-(3-oxododecanoyl)homoserine lactone, an autoinducer molecule which binds to LasR and thus acts in elastase biosynthesis regulation. The polypeptide is Acyl-homoserine-lactone synthase (lasI) (Pseudomonas aeruginosa (strain ATCC 15692 / DSM 22644 / CIP 104116 / JCM 14847 / LMG 12228 / 1C / PRS 101 / PAO1)).